Consider the following 211-residue polypeptide: Thymidylate kinase (211 aa).

10–17 (GPDGAGKT) is an ATP binding site.

It belongs to the thymidylate kinase family.

The enzyme catalyses dTMP + ATP = dTDP + ADP. Functionally, phosphorylation of dTMP to form dTDP in both de novo and salvage pathways of dTTP synthesis. This Lactococcus lactis subsp. cremoris (strain MG1363) protein is Thymidylate kinase.